Consider the following 301-residue polypeptide: 33 kDa chaperonin (301 aa).

Disulfide bonds link Cys239-Cys241 and Cys272-Cys275.

The protein belongs to the HSP33 family. In terms of processing, under oxidizing conditions two disulfide bonds are formed involving the reactive cysteines. Under reducing conditions zinc is bound to the reactive cysteines and the protein is inactive.

It is found in the cytoplasm. Functionally, redox regulated molecular chaperone. Protects both thermally unfolding and oxidatively damaged proteins from irreversible aggregation. Plays an important role in the bacterial defense system toward oxidative stress. This chain is 33 kDa chaperonin, found in Nostoc punctiforme (strain ATCC 29133 / PCC 73102).